We begin with the raw amino-acid sequence, 972 residues long: Hemoglobin and hemoglobin-haptoglobin-binding protein (972 aa).

Positions 1–22 are cleaved as a signal peptide; it reads MKANKLSAITLCILGYAHTVYA. The short motif at 32-39 is the TonB box element; the sequence is ETIVVSSE. The TBDR plug domain occupies 38-167; it reads SEDDSVHNKN…LGGTVSFESK (130 aa). The TBDR beta-barrel domain maps to 175–972; sequence DKNYHFGYKT…NFRVNAEITF (798 aa). The TonB C-terminal box signature appears at 955-972; sequence KRFNAPGRNFRVNAEITF.

The protein belongs to the TonB-dependent receptor family. Hemoglobin/haptoglobin binding protein subfamily.

Its subcellular location is the cell outer membrane. Its function is as follows. Acts as a receptor for hemoglobin or the hemoglobin/haptoglobin complex of the host and is required for heme uptake. May be involved in virulence. The chain is Hemoglobin and hemoglobin-haptoglobin-binding protein from Haemophilus ducreyi (strain 35000HP / ATCC 700724).